The following is a 460-amino-acid chain: Ammonium transporter Rh type C (460 aa).

The Cytoplasmic segment spans residues 1 to 9; sequence MVWNTNLRW. The helical transmembrane segment at 10 to 30 threads the bilayer; the sequence is RLPVTCLLLQVALVVLFGVFV. The Extracellular portion of the chain corresponds to 31-61; that stretch reads RYDMDADPHWIDKKEAENSTSDMENEFYYRY. N-linked (GlcNAc...) asparagine glycosylation is present at N48. The chain crosses the membrane as a helical span at residues 62-82; the sequence is PSFQDVHVMIFVGFGFLMTFL. The Cytoplasmic portion of the chain corresponds to 83–90; that stretch reads QRYGYSSV. A helical transmembrane segment spans residues 91 to 111; the sequence is GFNFLLAAFGIQWALLLQGWF. Topologically, residues 112–125 are extracellular; sequence HSYYRGYIRVGVEN. A helical membrane pass occupies residues 126 to 145; sequence LINADFCVGSVCVAFGAVLG. Over 146-151 the chain is Cytoplasmic; the sequence is KVSPVQ. A helical membrane pass occupies residues 152 to 174; it reads LLIMTLFQVTLFSVNEFILLNLL. At 175–179 the chain is on the extracellular side; that stretch reads EVKDA. The helical transmembrane segment at 180–200 threads the bilayer; it reads GGSMTIHTFGAYFGLTVTWIL. The Cytoplasmic portion of the chain corresponds to 201–219; sequence YRPGLHQSKERQSSVYHSD. The helical transmembrane segment at 220-240 threads the bilayer; that stretch reads LFAMIGTLFLWMYWPSFNSAV. Residues 241 to 251 lie on the Extracellular side of the membrane; that stretch reads SNHGDAQHRAA. The chain crosses the membrane as a helical span at residues 252 to 272; that stretch reads INTYCSLAACVLTSVALSSAL. Residues 273-285 are Cytoplasmic-facing; that stretch reads HKKGKLDMVHIQN. A helical transmembrane segment spans residues 286–306; sequence ATLAGGVAVGTAAEMMLMPYG. A topological domain (extracellular) is located at residue S307. Residues 308–328 form a helical membrane-spanning segment; sequence LIVGFICGIVSTLGFVYLTPF. Residues 329 to 339 lie on the Cytoplasmic side of the membrane; sequence LESRLRVQDTC. A helical membrane pass occupies residues 340–360; the sequence is GIHNLHGIPGIIGAIVGAVTA. Over 361 to 396 the chain is Extracellular; it reads SCANTDVYGVNGLTQAFGFDGFKTNRTPSMQGKFQA. Residues 397 to 417 form a helical membrane-spanning segment; sequence AGLFVSLAMALVGGIIVGIIL. Topologically, residues 418–460 are cytoplasmic; sequence KLPFWGQPADENCFEDAIYWEMPEEPKSTVLHPEDSTLKPSEP.

Belongs to the ammonium transporter (TC 2.A.49) family. Rh subfamily. In terms of assembly, homotrimer. N-glycosylated.

It localises to the apical cell membrane. It carries out the reaction NH4(+)(in) = NH4(+)(out). The enzyme catalyses methylamine(out) = methylamine(in). The catalysed reaction is CO2(out) = CO2(in). Its function is as follows. Ammonium transporter involved in the maintenance of acid-base homeostasis. Transports ammonium and its related derivative methylammonium across the plasma membrane of epithelial cells likely contributing to renal transepithelial ammonia transport and ammonia metabolism. Postulated to primarily mediate an electroneutral bidirectional transport of NH3 ammonia species according to a mechanism that implies interaction of an NH4(+) ion with acidic residues of the pore entry followed by dissociation of NH4(+) into NH3 and H(+). As a result NH3 transits through the central pore and is protonated on the extracellular side reforming NH4(+). May act as a CO2 channel providing for renal acid secretion. The sequence is that of Ammonium transporter Rh type C (RHCG) from Canis lupus familiaris (Dog).